The primary structure comprises 188 residues: Elongation factor P (188 aa).

Belongs to the elongation factor P family.

Its subcellular location is the cytoplasm. Its pathway is protein biosynthesis; polypeptide chain elongation. Its function is as follows. Involved in peptide bond synthesis. Stimulates efficient translation and peptide-bond synthesis on native or reconstituted 70S ribosomes in vitro. Probably functions indirectly by altering the affinity of the ribosome for aminoacyl-tRNA, thus increasing their reactivity as acceptors for peptidyl transferase. The chain is Elongation factor P from Natranaerobius thermophilus (strain ATCC BAA-1301 / DSM 18059 / JW/NM-WN-LF).